Consider the following 208-residue polypeptide: Octanoyltransferase (208 aa).

Residues 30 to 208 form the BPL/LPL catalytic domain; that stretch reads GTASEAVFIL…ILKQEFYKIF (179 aa). Substrate is bound by residues 69-76, 142-144, and 155-157; these read RGGKFTYH, SIG, and GVA. Catalysis depends on C173, which acts as the Acyl-thioester intermediate.

It belongs to the LipB family.

It is found in the cytoplasm. The enzyme catalyses octanoyl-[ACP] + L-lysyl-[protein] = N(6)-octanoyl-L-lysyl-[protein] + holo-[ACP] + H(+). The protein operates within protein modification; protein lipoylation via endogenous pathway; protein N(6)-(lipoyl)lysine from octanoyl-[acyl-carrier-protein]: step 1/2. Catalyzes the transfer of endogenously produced octanoic acid from octanoyl-acyl-carrier-protein onto the lipoyl domains of lipoate-dependent enzymes. Lipoyl-ACP can also act as a substrate although octanoyl-ACP is likely to be the physiological substrate. This Orientia tsutsugamushi (strain Boryong) (Rickettsia tsutsugamushi) protein is Octanoyltransferase.